Here is a 268-residue protein sequence, read N- to C-terminus: Sexual development regulator velC (268 aa).

Over residues 1–13 (MPHGFDKLLHPEP) the composition is skewed to basic and acidic residues. 2 disordered regions span residues 1 to 124 (MPHG…DNFS) and 142 to 165 (DPDPNSAPAHPSSISDPHISNPPH). Over residues 14–26 (EPQSPSPPPPPRR) the composition is skewed to pro residues. The Velvet domain maps to 28-257 (STQSRYHLHI…ELGFVELKTR (230 aa)). Positions 92–121 (DGNRDREREREHERERERERETDGVARTDD) are enriched in basic and acidic residues.

The protein belongs to the velvet family. VelC subfamily. Interacts with velA and vosA.

The protein resides in the nucleus. Its function is as follows. Velvet-domain-containing protein that acts as a positive regulator of sexual development. The protein is Sexual development regulator velC of Penicillium rubens (strain ATCC 28089 / DSM 1075 / NRRL 1951 / Wisconsin 54-1255) (Penicillium chrysogenum).